The sequence spans 218 residues: uncharacterized protein (218 aa).

One can recognise a CN hydrolase domain in the interval 4 to 207; that stretch reads WKVAAAQYEP…SLLLVGQRSS (204 aa).

This is an uncharacterized protein from Escherichia coli (strain K12).